The chain runs to 460 residues: Argininosuccinate lyase (460 aa).

Belongs to the lyase 1 family. Argininosuccinate lyase subfamily.

Its subcellular location is the cytoplasm. It carries out the reaction 2-(N(omega)-L-arginino)succinate = fumarate + L-arginine. Its pathway is amino-acid biosynthesis; L-arginine biosynthesis; L-arginine from L-ornithine and carbamoyl phosphate: step 3/3. In Pelotomaculum thermopropionicum (strain DSM 13744 / JCM 10971 / SI), this protein is Argininosuccinate lyase.